We begin with the raw amino-acid sequence, 250 residues long: Ubiquinone/menaquinone biosynthesis C-methyltransferase UbiE (250 aa).

S-adenosyl-L-methionine is bound by residues Ser73, Asp94, and 122–123 (NA).

Belongs to the class I-like SAM-binding methyltransferase superfamily. MenG/UbiE family.

It catalyses the reaction a 2-demethylmenaquinol + S-adenosyl-L-methionine = a menaquinol + S-adenosyl-L-homocysteine + H(+). It carries out the reaction a 2-methoxy-6-(all-trans-polyprenyl)benzene-1,4-diol + S-adenosyl-L-methionine = a 5-methoxy-2-methyl-3-(all-trans-polyprenyl)benzene-1,4-diol + S-adenosyl-L-homocysteine + H(+). It participates in quinol/quinone metabolism; menaquinone biosynthesis; menaquinol from 1,4-dihydroxy-2-naphthoate: step 2/2. Its pathway is cofactor biosynthesis; ubiquinone biosynthesis. Methyltransferase required for the conversion of demethylmenaquinol (DMKH2) to menaquinol (MKH2) and the conversion of 2-polyprenyl-6-methoxy-1,4-benzoquinol (DDMQH2) to 2-polyprenyl-3-methyl-6-methoxy-1,4-benzoquinol (DMQH2). The polypeptide is Ubiquinone/menaquinone biosynthesis C-methyltransferase UbiE (Legionella pneumophila subsp. pneumophila (strain Philadelphia 1 / ATCC 33152 / DSM 7513)).